Here is a 452-residue protein sequence, read N- to C-terminus: Growth/differentiation factor 6 (452 aa).

Positions 1-22 (MDTPRVLLWAIFLISFLWDLPG) are cleaved as a signal peptide. A propeptide spanning residues 23 to 332 (FQQASISSSS…LPSPGRRRRR (310 aa)) is cleaved from the precursor. Positions 29 to 93 (SSSSSTELDS…QEPPGRGPRV (65 aa)) are disordered. Composition is skewed to basic and acidic residues over residues 37-46 (DSTKDVENRK) and 58-75 (AEGR…ELRR). N-linked (GlcNAc...) asparagine glycosylation is present at Asn115. Disordered stretches follow at residues 244–267 (RDSG…LGFG) and 301–348 (AEAA…KKSR). The segment covering 301-317 (AEAAGAEGSWPAPSGAP) has biased composition (low complexity). Positions 327–348 (GRRRRRTALSSRHGKRHGKKSR) are enriched in basic residues. Disulfide bonds link Cys351-Cys417, Cys380-Cys449, and Cys384-Cys451.

Belongs to the TGF-beta family. As to quaternary structure, homodimer; disulfide-linked.

It localises to the secreted. Growth factor that controls proliferation and cellular differentiation in the retina and bone formation. Plays a key role in regulating apoptosis during retinal development. Establishes dorsal-ventral positional information in the retina and controls the formation of the retinotectal map. Required for normal formation of bones and joints in the limbs, skull, digits and axial skeleton. Plays a key role in establishing boundaries between skeletal elements during development. Regulation of GDF6 expression seems to be a mechanism for evolving species-specific changes in skeletal structures. Seems to positively regulate differentiation of chondrogenic tissue through the growth factor receptors subunits BMPR1A, BMPR1B, BMPR2 and ACVR2A, leading to the activation of SMAD1-SMAD5-SMAD8 complex. The regulation of chondrogenic differentiation is inhibited by NOG. Also involved in the induction of adipogenesis from mesenchymal stem cells. This mechanism acts through the growth factor receptors subunits BMPR1A, BMPR2 and ACVR2A and the activation of SMAD1-SMAD5-SMAD8 complex and MAPK14/p38. This chain is Growth/differentiation factor 6 (Gdf6), found in Rattus norvegicus (Rat).